A 113-amino-acid polypeptide reads, in one-letter code: MEARAIARYIRVSPFKARQVADLVRGKDTEEAMAILRYTNKKSAPLIRKVLQSAIANAEHNFDMDSNALVVSQIFIDEGPIVKRMRPRAYGRADVRRHRTSHITVVLREREVK.

The protein belongs to the universal ribosomal protein uL22 family. Part of the 50S ribosomal subunit.

Functionally, this protein binds specifically to 23S rRNA; its binding is stimulated by other ribosomal proteins, e.g. L4, L17, and L20. It is important during the early stages of 50S assembly. It makes multiple contacts with different domains of the 23S rRNA in the assembled 50S subunit and ribosome. In terms of biological role, the globular domain of the protein is located near the polypeptide exit tunnel on the outside of the subunit, while an extended beta-hairpin is found that lines the wall of the exit tunnel in the center of the 70S ribosome. In Syntrophomonas wolfei subsp. wolfei (strain DSM 2245B / Goettingen), this protein is Large ribosomal subunit protein uL22.